A 201-amino-acid polypeptide reads, in one-letter code: FMN-dependent NADH:quinone oxidoreductase (201 aa).

Residues serine 10, 16–18, 96–99, and 140–143 contribute to the FMN site; these read SQS, MYNF, and SRGG.

It belongs to the azoreductase type 1 family. As to quaternary structure, homodimer. FMN serves as cofactor.

The enzyme catalyses 2 a quinone + NADH + H(+) = 2 a 1,4-benzosemiquinone + NAD(+). It catalyses the reaction N,N-dimethyl-1,4-phenylenediamine + anthranilate + 2 NAD(+) = 2-(4-dimethylaminophenyl)diazenylbenzoate + 2 NADH + 2 H(+). Quinone reductase that provides resistance to thiol-specific stress caused by electrophilic quinones. In terms of biological role, also exhibits azoreductase activity. Catalyzes the reductive cleavage of the azo bond in aromatic azo compounds to the corresponding amines. The chain is FMN-dependent NADH:quinone oxidoreductase from Yersinia pseudotuberculosis serotype O:1b (strain IP 31758).